A 118-amino-acid chain; its full sequence is Succinate dehydrogenase assembly factor 1, mitochondrial (118 aa).

The LYR motif 1; required for interaction with HSC20 motif lies at 14-16; the sequence is LYR. An LYR motif 2; not required for interaction with HSC20 motif is present at residues 53-55; sequence LYR. The segment at 53–65 is interaction with SDHB; sequence LYRRGRRQLQMLR. Residues 72 to 118 form a disordered region; the sequence is MGAFVRTRGPTEESNGAGAPGTLSGEGDDPRKPLDSMRTPKTPLDGR.

The protein belongs to the complex I LYR family. SDHAF1 subfamily. In terms of assembly, interacts with SDHB within an SDHA-SDHB subcomplex. Also interacts with the iron-sulfur transfer complex formed by HSC20, HSPA9 and ISCU through direct binding to HSC20. Binding of SDHAF1 to SDHB precedes and is necessary for recruitment of the iron-sulfur transfer complex by SDHAF1.

The protein resides in the mitochondrion matrix. Plays an essential role in the assembly of succinate dehydrogenase (SDH), an enzyme complex (also referred to as respiratory complex II) that is a component of both the tricarboxylic acid (TCA) cycle and the mitochondrial electron transport chain, and which couples the oxidation of succinate to fumarate with the reduction of ubiquinone (coenzyme Q) to ubiquinol. Promotes maturation of the iron-sulfur protein subunit SDHB of the SDH catalytic dimer, protecting it from the deleterious effects of oxidants. May act together with SDHAF3. Contributes to iron-sulfur cluster incorporation into SDHB by binding to SDHB and recruiting the iron-sulfur transfer complex formed by HSC20, HSPA9 and ISCU through direct binding to HSC20. The sequence is that of Succinate dehydrogenase assembly factor 1, mitochondrial from Bos taurus (Bovine).